A 595-amino-acid polypeptide reads, in one-letter code: Pentatricopeptide repeat-containing protein At4g21065 (595 aa).

PPR repeat units follow at residues 84 to 118 (NVFI…GLVE), 120 to 154 (DTHT…GFGS), 155 to 185 (LIYV…MPEK), 186 to 220 (DLVA…GIKP), 221 to 255 (DGFT…GLTR), 256 to 290 (NLHS…NSVS), 291 to 317 (WTSL…MEST), 323 to 353 (CEIT…MREE), and 359 to 389 (RIEH…MPMQ). The tract at residues 394 to 469 (IWRTLLGACT…VPGHSLVEVG (76 aa)) is type E motif. The tract at residues 470–500 (NRVHEFLMGDKSHPQSDAIYAKLKEMTGRLR) is type E(+) motif. The segment at 501–595 (SEGYVPQISN…NGSCSCQDYW (95 aa)) is type DYW motif.

This sequence belongs to the PPR family. PCMP-H subfamily.

In Arabidopsis thaliana (Mouse-ear cress), this protein is Pentatricopeptide repeat-containing protein At4g21065 (PCMP-H28).